The chain runs to 601 residues: Somatic embryogenesis receptor kinase 5 (601 aa).

The N-terminal stretch at 1-24 (MEHGSSRGFIWLILFLDFVSRVTG) is a signal peptide. Residues 25-215 (KTQVDALIAL…SPSPSPSGTS (191 aa)) are Extracellular-facing. N-linked (GlcNAc...) asparagine glycosylation is found at asparagine 52, asparagine 81, asparagine 105, asparagine 129, asparagine 151, and asparagine 184. LRR repeat units lie at residues 71–94 (SVTRLDLGSANLSGELVPQLAQLP), 95–118 (NLQYLELFNNNITGEIPEELGDLM), 119–141 (ELVSLDLFANNISGPIPSSLGKL), 143–165 (KLRFLRLYNNSLSGEIPRSLTAL), and 166–188 (PLDVLDISNNRLSGDIPVNGSFS). A helical membrane pass occupies residues 216 to 236 (AAIVVGVAAGAALLFALAWWL). At 237–601 (RRKLQGHFLD…IENDYPSGPR (365 aa)) the chain is on the cytoplasmic side. Threonine 272 bears the Phosphothreonine mark. The Protein kinase domain maps to 275–572 (FSKRNVLGKG…KEEMPIHDFN (298 aa)). 281 to 289 (LGKGRFGIL) lines the ATP pocket. Position 298 is a phosphothreonine (threonine 298). Position 303 (lysine 303) interacts with ATP. Residues serine 356 and serine 359 each carry the phosphoserine modification. Aspartate 402 acts as the Proton acceptor in catalysis. Phosphothreonine is present on residues threonine 435, threonine 436, and threonine 441. Tyrosine 449 carries the post-translational modification Phosphotyrosine. Serine 451 carries the post-translational modification Phosphoserine. Residue threonine 452 is modified to Phosphothreonine. Residues serine 456 and serine 506 each carry the phosphoserine modification. The residue at position 532 (threonine 532) is a Phosphothreonine.

The protein belongs to the protein kinase superfamily. Ser/Thr protein kinase family. Interacts with TMK4/BARK1. In terms of processing, autophosphorylated.

The protein resides in the cell membrane. The enzyme catalyses L-seryl-[protein] + ATP = O-phospho-L-seryl-[protein] + ADP + H(+). It carries out the reaction L-threonyl-[protein] + ATP = O-phospho-L-threonyl-[protein] + ADP + H(+). Serine/threonine-kinase of unknown function. The sequence is that of Somatic embryogenesis receptor kinase 5 (SERK5) from Arabidopsis thaliana (Mouse-ear cress).